The primary structure comprises 360 residues: DNA replication and repair protein RecF (360 aa).

30 to 37 is an ATP binding site; that stretch reads GANGSGKT.

The protein belongs to the RecF family.

The protein localises to the cytoplasm. In terms of biological role, the RecF protein is involved in DNA metabolism; it is required for DNA replication and normal SOS inducibility. RecF binds preferentially to single-stranded, linear DNA. It also seems to bind ATP. The sequence is that of DNA replication and repair protein RecF from Acinetobacter baumannii (strain SDF).